Consider the following 110-residue polypeptide: MMEVTAKLRGAAISAQKARLVADLIRGKSVAHALNILNFSNKKAAVLVKKALESAIANAEHNNSLDVDDLKVSTIYVDEGMSLKRIMPRAKGRADRITKRTCHITVKVGV.

The protein belongs to the universal ribosomal protein uL22 family. In terms of assembly, part of the 50S ribosomal subunit.

Functionally, this protein binds specifically to 23S rRNA; its binding is stimulated by other ribosomal proteins, e.g. L4, L17, and L20. It is important during the early stages of 50S assembly. It makes multiple contacts with different domains of the 23S rRNA in the assembled 50S subunit and ribosome. In terms of biological role, the globular domain of the protein is located near the polypeptide exit tunnel on the outside of the subunit, while an extended beta-hairpin is found that lines the wall of the exit tunnel in the center of the 70S ribosome. The chain is Large ribosomal subunit protein uL22 from Acinetobacter baumannii (strain ACICU).